The following is a 419-amino-acid chain: D-mannonate dehydratase (419 aa).

The substrate site is built by Asn54 and His139. Tyr176 (proton donor/acceptor) is an active-site residue. Asp227 is a binding site for Mg(2+). His229 functions as the Proton donor/acceptor in the catalytic mechanism. Positions 253 and 279 each coordinate Mg(2+). Positions 279, 300, 329, 333, and 356 each coordinate substrate.

This sequence belongs to the mandelate racemase/muconate lactonizing enzyme family. GalD subfamily. Requires Mg(2+) as cofactor.

It carries out the reaction D-mannonate = 2-dehydro-3-deoxy-D-gluconate + H2O. Its pathway is carbohydrate metabolism; pentose and glucuronate interconversion. Catalyzes the dehydration of D-mannonate. Has no detectable activity with a panel of 70 other acid sugars (in vitro). The sequence is that of D-mannonate dehydratase from Xanthomonas oryzae pv. oryzicola (strain BLS256).